A 438-amino-acid polypeptide reads, in one-letter code: V-type ATP synthase beta chain (438 aa).

It belongs to the ATPase alpha/beta chains family.

Its function is as follows. Produces ATP from ADP in the presence of a proton gradient across the membrane. The V-type beta chain is a regulatory subunit. This is V-type ATP synthase beta chain (atpB) from Chlamydia trachomatis serovar D (strain ATCC VR-885 / DSM 19411 / UW-3/Cx).